The sequence spans 330 residues: tRNA (cytosine(38)-C(5))-methyltransferase (330 aa).

One can recognise an SAM-dependent MTase C5-type domain in the interval 7 to 330; it reads LRVLELYSGI…ISLLLEPLNF (324 aa). Cys81 is a catalytic residue.

Belongs to the class I-like SAM-binding methyltransferase superfamily. C5-methyltransferase family.

The protein localises to the cytoplasm. Its subcellular location is the nucleus. The enzyme catalyses cytidine(38) in tRNA + S-adenosyl-L-methionine = 5-methylcytidine(38) in tRNA + S-adenosyl-L-homocysteine + H(+). Functionally, specifically methylates cytosine 38 in the anticodon loop of tRNA(Asp). Can also methylate cytosine 38 in tRNA(Glu), albeit to a lower level, but not tRNA(Lys). Pmt1-dependent tRNA methylation is induced by nitrogen limitation and depends on the nutrient-sensing protein kinase sck2. Does not have DNA-methylation activity. The sequence is that of tRNA (cytosine(38)-C(5))-methyltransferase (pmt1) from Schizosaccharomyces pombe (strain 972 / ATCC 24843) (Fission yeast).